Here is a 408-residue protein sequence, read N- to C-terminus: UDP-N-acetylglucosamine--N-acetylmuramyl-(pentapeptide) pyrophosphoryl-undecaprenol N-acetylglucosamine transferase (408 aa).

The disordered stretch occupies residues 1–20 (MNDTVKKPTGGRGDDPLPAG). UDP-N-acetyl-alpha-D-glucosamine contacts are provided by residues 41–43 (TAG), asparagine 160, arginine 197, serine 231, and glutamine 327.

The protein belongs to the glycosyltransferase 28 family. MurG subfamily.

It is found in the cell membrane. It catalyses the reaction di-trans,octa-cis-undecaprenyl diphospho-N-acetyl-alpha-D-muramoyl-L-alanyl-D-glutamyl-meso-2,6-diaminopimeloyl-D-alanyl-D-alanine + UDP-N-acetyl-alpha-D-glucosamine = di-trans,octa-cis-undecaprenyl diphospho-[N-acetyl-alpha-D-glucosaminyl-(1-&gt;4)]-N-acetyl-alpha-D-muramoyl-L-alanyl-D-glutamyl-meso-2,6-diaminopimeloyl-D-alanyl-D-alanine + UDP + H(+). It participates in cell wall biogenesis; peptidoglycan biosynthesis. Functionally, cell wall formation. Catalyzes the transfer of a GlcNAc subunit on undecaprenyl-pyrophosphoryl-MurNAc-pentapeptide (lipid intermediate I) to form undecaprenyl-pyrophosphoryl-MurNAc-(pentapeptide)GlcNAc (lipid intermediate II). The polypeptide is UDP-N-acetylglucosamine--N-acetylmuramyl-(pentapeptide) pyrophosphoryl-undecaprenol N-acetylglucosamine transferase (Mycolicibacterium paratuberculosis (strain ATCC BAA-968 / K-10) (Mycobacterium paratuberculosis)).